A 173-amino-acid polypeptide reads, in one-letter code: Large ribosomal subunit protein uL10 (173 aa).

Belongs to the universal ribosomal protein uL10 family. As to quaternary structure, part of the ribosomal stalk of the 50S ribosomal subunit. The N-terminus interacts with L11 and the large rRNA to form the base of the stalk. The C-terminus forms an elongated spine to which L12 dimers bind in a sequential fashion forming a multimeric L10(L12)X complex.

Forms part of the ribosomal stalk, playing a central role in the interaction of the ribosome with GTP-bound translation factors. In Oleidesulfovibrio alaskensis (strain ATCC BAA-1058 / DSM 17464 / G20) (Desulfovibrio alaskensis), this protein is Large ribosomal subunit protein uL10.